Reading from the N-terminus, the 449-residue chain is Bifunctional protein GlmU (449 aa).

Positions 1-229 are pyrophosphorylase; that stretch reads MNHFAVILAA…FEETIGVNDR (229 aa). Residues 8–11, Lys-22, Gln-72, and 77–78 contribute to the UDP-N-acetyl-alpha-D-glucosamine site; these read LAAG and GT. Asp-102 contacts Mg(2+). Residues Gly-139, Glu-154, Asn-169, and Asn-227 each coordinate UDP-N-acetyl-alpha-D-glucosamine. A Mg(2+)-binding site is contributed by Asn-227. A linker region spans residues 230 to 250; the sequence is VALAQAETSMRKRTNEHWMRQ. The interval 251–449 is N-acetyltransferase; that stretch reads GVTFIDPAST…ERQTTKPDYR (199 aa). Arg-332 and Lys-350 together coordinate UDP-N-acetyl-alpha-D-glucosamine. His-362 serves as the catalytic Proton acceptor. Residues Tyr-365 and Asn-376 each coordinate UDP-N-acetyl-alpha-D-glucosamine. Acetyl-CoA is bound by residues 385 to 386, Ala-422, and Arg-439; that span reads NY.

It in the N-terminal section; belongs to the N-acetylglucosamine-1-phosphate uridyltransferase family. The protein in the C-terminal section; belongs to the transferase hexapeptide repeat family. In terms of assembly, homotrimer. The cofactor is Mg(2+).

It localises to the cytoplasm. The enzyme catalyses alpha-D-glucosamine 1-phosphate + acetyl-CoA = N-acetyl-alpha-D-glucosamine 1-phosphate + CoA + H(+). The catalysed reaction is N-acetyl-alpha-D-glucosamine 1-phosphate + UTP + H(+) = UDP-N-acetyl-alpha-D-glucosamine + diphosphate. It functions in the pathway nucleotide-sugar biosynthesis; UDP-N-acetyl-alpha-D-glucosamine biosynthesis; N-acetyl-alpha-D-glucosamine 1-phosphate from alpha-D-glucosamine 6-phosphate (route II): step 2/2. The protein operates within nucleotide-sugar biosynthesis; UDP-N-acetyl-alpha-D-glucosamine biosynthesis; UDP-N-acetyl-alpha-D-glucosamine from N-acetyl-alpha-D-glucosamine 1-phosphate: step 1/1. Its pathway is bacterial outer membrane biogenesis; LPS lipid A biosynthesis. Its function is as follows. Catalyzes the last two sequential reactions in the de novo biosynthetic pathway for UDP-N-acetylglucosamine (UDP-GlcNAc). The C-terminal domain catalyzes the transfer of acetyl group from acetyl coenzyme A to glucosamine-1-phosphate (GlcN-1-P) to produce N-acetylglucosamine-1-phosphate (GlcNAc-1-P), which is converted into UDP-GlcNAc by the transfer of uridine 5-monophosphate (from uridine 5-triphosphate), a reaction catalyzed by the N-terminal domain. The chain is Bifunctional protein GlmU from Exiguobacterium sibiricum (strain DSM 17290 / CCUG 55495 / CIP 109462 / JCM 13490 / 255-15).